The following is a 161-amino-acid chain: Phosphopantetheine adenylyltransferase (161 aa).

Thr-10 provides a ligand contact to substrate. Residues Thr-10–Phe-11 and His-18 contribute to the ATP site. 3 residues coordinate substrate: Lys-42, Leu-74, and Arg-88. Residues Gly-89 to Arg-91, Glu-99, and Tyr-123 to Thr-129 each bind ATP.

The protein belongs to the bacterial CoaD family. In terms of assembly, homohexamer. Mg(2+) is required as a cofactor.

It localises to the cytoplasm. It carries out the reaction (R)-4'-phosphopantetheine + ATP + H(+) = 3'-dephospho-CoA + diphosphate. It functions in the pathway cofactor biosynthesis; coenzyme A biosynthesis; CoA from (R)-pantothenate: step 4/5. Reversibly transfers an adenylyl group from ATP to 4'-phosphopantetheine, yielding dephospho-CoA (dPCoA) and pyrophosphate. This Aquifex aeolicus (strain VF5) protein is Phosphopantetheine adenylyltransferase.